We begin with the raw amino-acid sequence, 2194 residues long: PDZ and LIM domain protein Zasp (2194 aa).

The 83-residue stretch at 8-90 folds into the PDZ domain; it reads QIKLSRFDAQ…NFVITVQRGG (83 aa). The disordered stretch occupies residues 211–277; the sequence is TGQSTPAFGN…KPPSTGGLPT (67 aa). Over residues 228–253 the composition is skewed to low complexity; the sequence is PQQLQQPQQQYNQHQQHYHQQQQQQQ. In terms of domain architecture, LIM zinc-binding 1 spans 280–339; it reads NICTECERLITGVFVRIKDKNLHVECFKCATCGTSLKNQGYYNFNNKLYCDIHAKQAAIN. Low complexity predominate over residues 415 to 435; sequence AATPQAATATDSPAATASSSD. Disordered regions lie at residues 415–436, 457–476, 511–558, 580–611, 623–692, 896–940, 1223–1260, 1297–1322, 1550–1632, 1646–1738, and 1815–1837; these read AATPQAATATDSPAATASSSDN, VALAPPPPQPPTAGGGDQPF, GAAA…AVEE, SRQSQRGSSFTWPPPQDDSHLAPTAAPLYIPP, VQQV…TTSE, AAAA…PRGS, LTQKSQQQPPQANQQQQQQQQQRGTQQQQHSQVTQRTQ, QSQSSASYSSKATACSNSSSTVPPAN, LNAS…QQPE, QREQ…YGKT, and APPPGFLQQQQQQQQRSAFSGYQ. The segment covering 515–530 has biased composition (low complexity); the sequence is PKSPVSYPPQQQQQSP. 2 stretches are compositionally biased toward polar residues: residues 580–590 and 644–667; these read SRQSQRGSSFT and VGTSANGAPQWQSYSAPQLTTASA. Residues 676 to 692 show a composition bias toward low complexity; that stretch reads SSDSYTSTSTTTTTTSE. Over residues 1598–1610 the composition is skewed to polar residues; that stretch reads QTGSITTGQSYQG. Composition is skewed to low complexity over residues 1616–1630, 1646–1668, and 1699–1727; these read SEQSSQSASQSYNQQ, QREQSSQLQQQAQSQTQSQTRSQ, and SQSVSQSKAQSQSISQAQTQAQSQSQNQS. LIM zinc-binding domains are found at residues 2018 to 2078, 2079 to 2138, and 2139 to 2194; these read PLCN…KYLA, PTCS…LFTT, and KCFA…NHAR.

In terms of assembly, interacts with alpha-actinin (Actn). In terms of tissue distribution, expression is first detected in the proctodeum and the midgut primordium. In stage 11 embryos, expression is predominant in the leading edge of epidermal cells adjacent to the amnioserosa. Stage 12 embryos exhibit expression in the midgut and the leading edge. Expressed in several rows of germ band cells next to the leading edge at stage 14. Strong expression is visible in the midgut and pharyngeal muscles of stage 17 embryos. Also expressed in somatic muscles and visceral mesoderm. Colocalizes with mys (beta PS integrin) in myotendinous junctions and with Actn in muscle Z lines.

The protein resides in the cytoplasm. It is found in the cytoskeleton. Functionally, regulator of cell matrix adhesion having two related functions, one upstream of Actn organizing the Z line and the other downstream of integrins regulating assembly of integrin adhesion sites. Also required for the formation of myotendinous junctions in muscles. The protein is PDZ and LIM domain protein Zasp (Zasp52) of Drosophila melanogaster (Fruit fly).